A 220-amino-acid polypeptide reads, in one-letter code: B-cell antigen receptor complex-associated protein alpha chain (220 aa).

A signal peptide spans Met-1–Ala-28. The region spanning Leu-29–Leu-117 is the Ig-like C2-type domain. At Leu-29 to Arg-137 the chain is on the extracellular side. The cysteines at positions 50 and 101 are disulfide-linked. Asn-58 and Asn-68 each carry an N-linked (GlcNAc...) asparagine glycan. The helical transmembrane segment at Ile-138–Phe-159 threads the bilayer. Topologically, residues Arg-160–Pro-220 are cytoplasmic. Residues Asp-171 to Gly-199 enclose the ITAM domain. Phosphotyrosine; by SRC-type Tyr-kinases is present on residues Tyr-182 and Tyr-193. Position 198 is an asymmetric dimethylarginine; by PRMT1 (Arg-198). Tyr-204 carries the phosphotyrosine; by Tyr-kinases modification.

As to quaternary structure, heterodimer of alpha and beta chains; disulfide-linked. Part of the B-cell antigen receptor complex where the alpha/beta chain heterodimer is non-covalently associated with an antigen-specific membrane-bound surface immunoglobulin of two heavy chains and two light chains. Interacts through its phosphorylated ITAM domain with the SH2 domains of SYK which stimulates SYK autophosphorylation and activation. Also interacts, when phosphorylated on Tyr-204, with the SH2 domain of BLNK/SLP65, bringing BLNK into proximity with SYK and allowing SYK to phosphorylate BLNK which is necessary for trafficking of the BCR to late endosomes. Interacts with Src-family tyrosine kinases including FYN and LYN, increasing their activity. Post-translationally, phosphorylated on tyrosine, serine and threonine residues upon B-cell activation. Phosphorylation of tyrosine residues by Src-family kinases, including LYN, is an early and essential feature of the BCR signaling cascade. The phosphorylated tyrosines serve as docking sites for SH2-domain containing kinases, leading to their activation which in turn leads to phosphorylation of downstream targets. Phosphorylation of serine and threonine residues may prevent subsequent tyrosine phosphorylation. In terms of processing, arginine methylation in the ITAM domain may interfere with the binding of SYK. It promotes signals leading to B-cell differentiation. B-cells.

The protein localises to the cell membrane. Required in cooperation with CD79B for initiation of the signal transduction cascade activated by binding of antigen to the B-cell antigen receptor complex (BCR) which leads to internalization of the complex, trafficking to late endosomes and antigen presentation. Also required for BCR surface expression and for efficient differentiation of pro- and pre-B-cells. Stimulates SYK autophosphorylation and activation. Binds to BLNK, bringing BLNK into proximity with SYK and allowing SYK to phosphorylate BLNK. Also interacts with and increases activity of some Src-family tyrosine kinases. Represses BCR signaling during development of immature B-cells. The polypeptide is B-cell antigen receptor complex-associated protein alpha chain (Cd79a) (Mus musculus (Mouse)).